The chain runs to 248 residues: uncharacterized protein (248 aa).

It to M.jannaschii MJ1452.

This is an uncharacterized protein from Methanothermobacter thermautotrophicus (strain ATCC 29096 / DSM 1053 / JCM 10044 / NBRC 100330 / Delta H) (Methanobacterium thermoautotrophicum).